The sequence spans 598 residues: Pentatricopeptide repeat-containing protein At5g14820, mitochondrial (598 aa).

A mitochondrion-targeting transit peptide spans Met-1–Val-98. PPR repeat units follow at residues Asp-193 to Thr-227, Glu-229 to Ile-261, Gly-262 to Arg-292, Asn-296 to Pro-330, Asp-331 to Pro-365, Asn-366 to Pro-400, Asp-401 to Pro-435, Asp-436 to Pro-470, Ser-471 to Pro-505, and Asp-506 to Thr-540.

Belongs to the PPR family. P subfamily.

It is found in the mitochondrion. The protein is Pentatricopeptide repeat-containing protein At5g14820, mitochondrial of Arabidopsis thaliana (Mouse-ear cress).